Reading from the N-terminus, the 198-residue chain is Recombination protein RecR (198 aa).

A C4-type zinc finger spans residues 57–72 (CSVCGHITENDPCYIC). The Toprim domain occupies 80–175 (SVICVVEDDK…KVTRLAQGLS (96 aa)).

This sequence belongs to the RecR family.

Functionally, may play a role in DNA repair. It seems to be involved in an RecBC-independent recombinational process of DNA repair. It may act with RecF and RecO. The sequence is that of Recombination protein RecR from Staphylococcus aureus (strain MRSA252).